The following is a 919-amino-acid chain: Phosphoenolpyruvate carboxylase (919 aa).

Catalysis depends on residues His-138 and Lys-579.

Belongs to the PEPCase type 1 family. It depends on Mg(2+) as a cofactor.

It carries out the reaction oxaloacetate + phosphate = phosphoenolpyruvate + hydrogencarbonate. Its activity is regulated as follows. Activity not stimulated by acetyl-CoA in the absence of any allosteric inhibitor, while the corresponding protein from E.coli is strongly stimulated. In terms of biological role, forms oxaloacetate, a four-carbon dicarboxylic acid source for the tricarboxylic acid cycle. The sequence is that of Phosphoenolpyruvate carboxylase (ppc) from Corynebacterium glutamicum (strain ATCC 13032 / DSM 20300 / JCM 1318 / BCRC 11384 / CCUG 27702 / LMG 3730 / NBRC 12168 / NCIMB 10025 / NRRL B-2784 / 534).